The chain runs to 177 residues: Nucleoside triphosphate/diphosphate phosphatase (177 aa).

The Proton donor role is filled by Arg23. Residues Asn87, Asp103, Asp105, Asp107, Asp120, and Glu123 each coordinate Mg(2+).

Belongs to the Ntdp family. Mg(2+) is required as a cofactor.

The catalysed reaction is a ribonucleoside 5'-triphosphate + H2O = a ribonucleoside 5'-diphosphate + phosphate + H(+). The enzyme catalyses a ribonucleoside 5'-diphosphate + H2O = a ribonucleoside 5'-phosphate + phosphate + H(+). Has nucleoside phosphatase activity towards nucleoside triphosphates and nucleoside diphosphates. The sequence is that of Nucleoside triphosphate/diphosphate phosphatase from Streptococcus pyogenes serotype M1.